The sequence spans 420 residues: UDP-N-acetylglucosamine 1-carboxyvinyltransferase (420 aa).

Residue 22–23 (KN) participates in phosphoenolpyruvate binding. A UDP-N-acetyl-alpha-D-glucosamine-binding site is contributed by R91. C115 functions as the Proton donor in the catalytic mechanism. Residue C115 is modified to 2-(S-cysteinyl)pyruvic acid O-phosphothioketal. UDP-N-acetyl-alpha-D-glucosamine contacts are provided by residues 120-124 (RPVDL), 160-163 (KVSV), D305, and I327.

The protein belongs to the EPSP synthase family. MurA subfamily.

The protein localises to the cytoplasm. The catalysed reaction is phosphoenolpyruvate + UDP-N-acetyl-alpha-D-glucosamine = UDP-N-acetyl-3-O-(1-carboxyvinyl)-alpha-D-glucosamine + phosphate. It functions in the pathway cell wall biogenesis; peptidoglycan biosynthesis. Its function is as follows. Cell wall formation. Adds enolpyruvyl to UDP-N-acetylglucosamine. This chain is UDP-N-acetylglucosamine 1-carboxyvinyltransferase, found in Pectobacterium atrosepticum (strain SCRI 1043 / ATCC BAA-672) (Erwinia carotovora subsp. atroseptica).